Here is a 144-residue protein sequence, read N- to C-terminus: Putative pre-16S rRNA nuclease (144 aa).

Belongs to the YqgF nuclease family.

Its subcellular location is the cytoplasm. Functionally, could be a nuclease involved in processing of the 5'-end of pre-16S rRNA. The sequence is that of Putative pre-16S rRNA nuclease from Lactiplantibacillus plantarum (strain ATCC BAA-793 / NCIMB 8826 / WCFS1) (Lactobacillus plantarum).